Reading from the N-terminus, the 715-residue chain is Fatty acid oxidation complex subunit alpha (715 aa).

The interval 1–190 (MTTTSAFMLS…KAGLVDDVVP (190 aa)) is enoyl-CoA hydratase. The 3-hydroxyacyl-CoA dehydrogenase stretch occupies residues 306 to 714 (GPLNSVGILG…FWTNGETDQG (409 aa)).

The protein in the N-terminal section; belongs to the enoyl-CoA hydratase/isomerase family. It in the central section; belongs to the 3-hydroxyacyl-CoA dehydrogenase family. Heterotetramer of two alpha chains (FadJ) and two beta chains (FadI).

The protein resides in the cytoplasm. The catalysed reaction is a (3S)-3-hydroxyacyl-CoA = a (2E)-enoyl-CoA + H2O. It carries out the reaction a 4-saturated-(3S)-3-hydroxyacyl-CoA = a (3E)-enoyl-CoA + H2O. It catalyses the reaction a (3S)-3-hydroxyacyl-CoA + NAD(+) = a 3-oxoacyl-CoA + NADH + H(+). The enzyme catalyses (3S)-3-hydroxybutanoyl-CoA = (3R)-3-hydroxybutanoyl-CoA. The protein operates within lipid metabolism; fatty acid beta-oxidation. In terms of biological role, catalyzes the formation of a hydroxyacyl-CoA by addition of water on enoyl-CoA. Also exhibits 3-hydroxyacyl-CoA epimerase and 3-hydroxyacyl-CoA dehydrogenase activities. In Salmonella typhi, this protein is Fatty acid oxidation complex subunit alpha.